The sequence spans 119 residues: Large ribosomal subunit protein uL18 (119 aa).

Belongs to the universal ribosomal protein uL18 family. Part of the 50S ribosomal subunit; part of the 5S rRNA/L5/L18/L25 subcomplex. Contacts the 5S and 23S rRNAs.

Functionally, this is one of the proteins that bind and probably mediate the attachment of the 5S RNA into the large ribosomal subunit, where it forms part of the central protuberance. This chain is Large ribosomal subunit protein uL18, found in Malacoplasma penetrans (strain HF-2) (Mycoplasma penetrans).